The following is a 431-amino-acid chain: Phosphoribosylamine--glycine ligase (431 aa).

The 208-residue stretch at 109-316 (KDFLARHGIP…LVDLVEAAID (208 aa)) folds into the ATP-grasp domain. Position 135-196 (135-196 (VREKGAPIVV…EEFLDGEEAS (62 aa))) interacts with ATP. Mg(2+) contacts are provided by glutamate 286 and asparagine 288.

Belongs to the GARS family. Mg(2+) serves as cofactor. Mn(2+) is required as a cofactor.

The catalysed reaction is 5-phospho-beta-D-ribosylamine + glycine + ATP = N(1)-(5-phospho-beta-D-ribosyl)glycinamide + ADP + phosphate + H(+). It functions in the pathway purine metabolism; IMP biosynthesis via de novo pathway; N(1)-(5-phospho-D-ribosyl)glycinamide from 5-phospho-alpha-D-ribose 1-diphosphate: step 2/2. This chain is Phosphoribosylamine--glycine ligase, found in Xanthomonas campestris pv. campestris (strain ATCC 33913 / DSM 3586 / NCPPB 528 / LMG 568 / P 25).